The primary structure comprises 142 residues: Large ribosomal subunit protein uL13 (142 aa).

It belongs to the universal ribosomal protein uL13 family. In terms of assembly, part of the 50S ribosomal subunit.

In terms of biological role, this protein is one of the early assembly proteins of the 50S ribosomal subunit, although it is not seen to bind rRNA by itself. It is important during the early stages of 50S assembly. This is Large ribosomal subunit protein uL13 from Saccharophagus degradans (strain 2-40 / ATCC 43961 / DSM 17024).